A 91-amino-acid polypeptide reads, in one-letter code: MGRSLKKGPFIADSLLRKVEKQNAADDKSVIKTWSRASTILPMMIGHTIAVHNGKTHVPVFVTEQMVGHKLGEFAPTRTFKGHIKDKKGGR.

It belongs to the universal ribosomal protein uS19 family.

Functionally, protein S19 forms a complex with S13 that binds strongly to the 16S ribosomal RNA. This is Small ribosomal subunit protein uS19 from Synechococcus sp. (strain WH7803).